The chain runs to 253 residues: MANLGCWMLVLFVATWSDLGLCKKRPKPGGWNTGGSRYPGQGSPGGNRYPPQGGGGWGQPHGGGWGQPHGGGWGQPHGGGWGQPHGGGWGQGGGTHSQWNKPSKPKTSMKHMAGAAAAGAVVGGLGGYMLGSAMSRPLIHFGNDYEDRYYRENMYRYPNQVYYRPVDQYSNQNNFVHDCVNITIKQHTVTTTTKGENFTETDVKMMERVVEQMCITQYEKESQAYYQRGSSMVLFSSPPVILLISFLIFLIVG.

Residues 1–22 form the signal peptide; sequence MANLGCWMLVLFVATWSDLGLC. An interaction with ADGRG6 region spans residues 23-38; sequence KKRPKPGGWNTGGSRY. An interaction with GRB2, ERI3 and SYN1 region spans residues 23–230; that stretch reads KKRPKPGGWN…ESQAYYQRGS (208 aa). Residues 26–108 are disordered; sequence PKPGGWNTGG…WNKPSKPKTS (83 aa). 5 repeat units span residues 51-59, 60-67, 68-75, 76-83, and 84-91. Positions 51-91 are 5 X 8 AA tandem repeats of P-H-G-G-G-W-G-Q; that stretch reads PQGGGGWGQPHGGGWGQPHGGGWGQPHGGGWGQPHGGGWGQ. Residues 52–95 show a composition bias toward gly residues; it reads QGGGGWGQPHGGGWGQPHGGGWGQPHGGGWGQPHGGGWGQGGGT. Positions 61, 62, 63, 69, 70, 71, 77, 78, 79, 85, 86, and 87 each coordinate Cu(2+). A disulfide bridge connects residues cysteine 179 and cysteine 214. N-linked (GlcNAc...) asparagine glycosylation is found at asparagine 181 and asparagine 197. A lipid anchor (GPI-anchor amidated serine) is attached at serine 230. Residues 231 to 253 constitute a propeptide, removed in mature form; that stretch reads SMVLFSSPPVILLISFLIFLIVG.

The protein belongs to the prion family. Monomer and homodimer. Has a tendency to aggregate into amyloid fibrils containing a cross-beta spine, formed by a steric zipper of superposed beta-strands. Soluble oligomers may represent an intermediate stage on the path to fibril formation. Copper binding may promote oligomerization. Interacts with GRB2, APP, ERI3/PRNPIP and SYN1. Mislocalized cytosolically exposed PrP interacts with MGRN1; this interaction alters MGRN1 subcellular location and causes lysosomal enlargement. Interacts with APP. Interacts with KIAA1191. Interacts with ADGRG6.

Its subcellular location is the cell membrane. The protein localises to the golgi apparatus. Its function is as follows. Its primary physiological function is unclear. May play a role in neuronal development and synaptic plasticity. May be required for neuronal myelin sheath maintenance. May promote myelin homeostasis through acting as an agonist for ADGRG6 receptor. May play a role in iron uptake and iron homeostasis. Soluble oligomers are toxic to cultured neuroblastoma cells and induce apoptosis (in vitro). Association with GPC1 (via its heparan sulfate chains) targets PRNP to lipid rafts. Also provides Cu(2+) or Zn(2+) for the ascorbate-mediated GPC1 deaminase degradation of its heparan sulfate side chains. The polypeptide is Major prion protein (PRNP) (Colobus guereza (Mantled guereza)).